The sequence spans 367 residues: Anthranilate phosphoribosyltransferase (367 aa).

A compositionally biased stretch (low complexity) spans 1-17 (MVLSSEASSAADHSAAA). The segment at 1 to 22 (MVLSSEASSAADHSAAAPIPTS) is disordered. 5-phospho-alpha-D-ribose 1-diphosphate-binding positions include Gly-104, 107 to 108 (GD), Thr-112, 114 to 117 (NLST), 132 to 140 (KHGNRAASS), and Gly-144. Position 104 (Gly-104) interacts with anthranilate. Ser-116 is a Mg(2+) binding site. Anthranilate is bound at residue Asn-135. Arg-190 contributes to the anthranilate binding site. Residues Asp-248 and Glu-249 each contribute to the Mg(2+) site.

The protein belongs to the anthranilate phosphoribosyltransferase family. In terms of assembly, homodimer. It depends on Mg(2+) as a cofactor.

It carries out the reaction N-(5-phospho-beta-D-ribosyl)anthranilate + diphosphate = 5-phospho-alpha-D-ribose 1-diphosphate + anthranilate. It functions in the pathway amino-acid biosynthesis; L-tryptophan biosynthesis; L-tryptophan from chorismate: step 2/5. Functionally, catalyzes the transfer of the phosphoribosyl group of 5-phosphorylribose-1-pyrophosphate (PRPP) to anthranilate to yield N-(5'-phosphoribosyl)-anthranilate (PRA). The chain is Anthranilate phosphoribosyltransferase from Mycobacterium ulcerans (strain Agy99).